We begin with the raw amino-acid sequence, 384 residues long: Galactokinase (384 aa).

34–37 (EHTD) provides a ligand contact to substrate. 123–129 (SSGLSSS) provides a ligand contact to ATP. 2 residues coordinate Mg(2+): Ser129 and Glu161. Catalysis depends on Asp173, which acts as the Proton acceptor. A substrate-binding site is contributed by Tyr222.

It belongs to the GHMP kinase family. GalK subfamily.

The protein resides in the cytoplasm. It catalyses the reaction alpha-D-galactose + ATP = alpha-D-galactose 1-phosphate + ADP + H(+). The protein operates within carbohydrate metabolism; galactose metabolism. Functionally, catalyzes the transfer of the gamma-phosphate of ATP to D-galactose to form alpha-D-galactose-1-phosphate (Gal-1-P). This Actinobacillus pleuropneumoniae (Haemophilus pleuropneumoniae) protein is Galactokinase.